A 1366-amino-acid polypeptide reads, in one-letter code: Protein HUA2-LIKE 2 (1366 aa).

Residues 24–81 (VGDLVLAKVKGFPAWPAVVSEPEKWDASPDSKKVFVHFFGTQQIAFCNPGDVEAFTEE) form the PWWP domain. The span at 111–124 (LKQQERASDPKSAE) shows a compositional bias: basic and acidic residues. Disordered regions lie at residues 111 to 138 (LKQQ…TLMP), 203 to 319 (TYSS…SGSK), 384 to 403 (NVQT…CEEN), 427 to 451 (EANS…AQTS), and 787 to 808 (SESA…TGEK). A compositionally biased stretch (polar residues) spans 213-252 (VRSQNCAPQNETCPVQRSKSPSRLQTEKLQSSMLQNSDGG). The segment covering 391–403 (SHEKFTERPCEEN) has biased composition (basic and acidic residues). The segment covering 787–803 (SESANDMQNNSSGSPNI) has biased composition (polar residues). The region spanning 836–977 (DVQSTRESYE…HHIRELDSHS (142 aa)) is the CID domain. Disordered regions lie at residues 1027-1076 (LKDE…TAER) and 1128-1366 (TSHQ…QRSD). Acidic residues predominate over residues 1032–1052 (GGSDSEGGCDSEGGSDSDGGD). Basic and acidic residues predominate over residues 1057-1066 (TPEHESRILE). Residues 1138-1152 (PPLPSSSPPPPPAPP) show a composition bias toward pro residues. Residues 1191–1223 (LSGSTMHYQGPESSYISGVQLTNSIPQADGSNF) are compositionally biased toward polar residues. Over residues 1229-1244 (PSHPHPHPPPPPPPPQ) the composition is skewed to pro residues. 2 stretches are compositionally biased toward basic and acidic residues: residues 1251–1262 (EPGHVLKSHRDA) and 1275–1298 (CDER…RDNW). The segment covering 1299–1309 (RYPPSSSYGSR) has biased composition (low complexity).

As to expression, expressed throughout young primordia, and vegetative and reproductive apices.

Its subcellular location is the nucleus. Probable transcription factor that acts with partial redundancy with HULK1 and HULK3. Plays diverse and essential roles in the control of plant development, physiology and flowering time. This chain is Protein HUA2-LIKE 2, found in Arabidopsis thaliana (Mouse-ear cress).